The following is a 406-amino-acid chain: Sprouty-related, EVH1 domain-containing protein 1 (406 aa).

The 118-residue stretch at 3-120 folds into the WH1 domain; sequence GEQEPDDSYA…RGIRRAIEDL (118 aa). The disordered stretch occupies residues 124 to 154; that stretch reads LPASCHGESETSEDGPQVNKEDHYSTHNNDH. Basic and acidic residues predominate over residues 142-154; it reads NKEDHYSTHNNDH. The 53-residue stretch at 195–247 folds into the KBD domain; sequence PIRHVSFQDEDEIVRINPRDMIIRRYADYRHPDIFRNDVDREEPEDVTFFTKT. Residues 296-404 enclose the SPR domain; sequence SCVYCQERFN…CGCCGGKHKA (109 aa).

Post-translationally, palmitoylated by ZDHHC17/HIP14. Ubiquitinated. In terms of processing, phosphorylated on tyrosine.

Its subcellular location is the cell membrane. In terms of biological role, tyrosine kinase substrate that inhibits growth-factor-mediated activation of MAP kinase. The chain is Sprouty-related, EVH1 domain-containing protein 1 (spred1) from Xenopus tropicalis (Western clawed frog).